A 277-amino-acid polypeptide reads, in one-letter code: Diaminopimelate epimerase (277 aa).

Residues Asn-11 and Asn-72 each coordinate substrate. Cys-81 acts as the Proton donor in catalysis. Substrate is bound by residues 82–83, Asn-189, and 207–208; these read GN and ER. Cys-217 functions as the Proton acceptor in the catalytic mechanism. 218–219 contacts substrate; it reads GT.

Belongs to the diaminopimelate epimerase family. As to quaternary structure, homodimer.

It is found in the cytoplasm. It catalyses the reaction (2S,6S)-2,6-diaminopimelate = meso-2,6-diaminopimelate. It functions in the pathway amino-acid biosynthesis; L-lysine biosynthesis via DAP pathway; DL-2,6-diaminopimelate from LL-2,6-diaminopimelate: step 1/1. Functionally, catalyzes the stereoinversion of LL-2,6-diaminopimelate (L,L-DAP) to meso-diaminopimelate (meso-DAP), a precursor of L-lysine and an essential component of the bacterial peptidoglycan. This is Diaminopimelate epimerase from Hydrogenobaculum sp. (strain Y04AAS1).